We begin with the raw amino-acid sequence, 317 residues long: Zinc finger protein CRM3 (317 aa).

Residues 1–15 (MNFSLSKQSSEKQSS) show a composition bias toward low complexity. The segment at 1–22 (MNFSLSKQSSEKQSSYTDKSRS) is disordered. 2 consecutive C2H2-type zinc fingers follow at residues 254–276 (KQCP…YLIH) and 282–306 (FKCT…LKSH).

It localises to the nucleus. Its function is as follows. Probable transcription factor involved in the regulation of the transcription of genes involved in cell rescue and defense, as well as cell cycle and DNA processing. The chain is Zinc finger protein CRM3 from Saccharomyces cerevisiae (strain ATCC 204508 / S288c) (Baker's yeast).